Consider the following 313-residue polypeptide: 3'-5' exoribonuclease YhaM (313 aa).

In terms of domain architecture, HD spans 163-279; that stretch reads HVVSMLRLAK…LHQIDLMDAS (117 aa).

The protein belongs to the YhaM family.

Shows a 3'-5' exoribonuclease activity. This Listeria welshimeri serovar 6b (strain ATCC 35897 / DSM 20650 / CCUG 15529 / CIP 8149 / NCTC 11857 / SLCC 5334 / V8) protein is 3'-5' exoribonuclease YhaM.